A 285-amino-acid polypeptide reads, in one-letter code: Diphthine methyl ester synthase (285 aa).

Residues Leu-9, Asp-84, Gly-87, 112–113 (SI), and Leu-163 each bind S-adenosyl-L-methionine. Phosphoserine is present on Ser-171. Residues Val-225 and His-250 each coordinate S-adenosyl-L-methionine.

It belongs to the diphthine synthase family.

It carries out the reaction 2-[(3S)-amino-3-carboxypropyl]-L-histidyl-[translation elongation factor 2] + 4 S-adenosyl-L-methionine = diphthine methyl ester-[translation elongation factor 2] + 4 S-adenosyl-L-homocysteine + 3 H(+). The protein operates within protein modification; peptidyl-diphthamide biosynthesis. Its function is as follows. S-adenosyl-L-methionine-dependent methyltransferase that catalyzes four methylations of the modified target histidine residue in translation elongation factor 2 (EF-2), to form an intermediate called diphthine methyl ester. The four successive methylation reactions represent the second step of diphthamide biosynthesis. The chain is Diphthine methyl ester synthase (DPH5) from Bos taurus (Bovine).